The sequence spans 324 residues: Lactonase drp35 (324 aa).

Ca(2+)-binding residues include Glu47, Ser109, Gly111, Asp129, Thr132, Tyr134, Asp137, Asn184, Asp235, and Ser236. The active-site Proton donor is Asp235.

The protein belongs to the SMP-30/CGR1 family. It depends on Ca(2+) as a cofactor.

The protein resides in the cytoplasm. Functionally, exhibits lactonase activity. Acts in cells with perturbed membrane integrity and is possibly related to the membrane homeostasis. This Staphylococcus saprophyticus subsp. saprophyticus (strain ATCC 15305 / DSM 20229 / NCIMB 8711 / NCTC 7292 / S-41) protein is Lactonase drp35 (drp35).